The sequence spans 192 residues: Imidazoleglycerol-phosphate dehydratase (192 aa).

The protein belongs to the imidazoleglycerol-phosphate dehydratase family.

It localises to the cytoplasm. The catalysed reaction is D-erythro-1-(imidazol-4-yl)glycerol 3-phosphate = 3-(imidazol-4-yl)-2-oxopropyl phosphate + H2O. Its pathway is amino-acid biosynthesis; L-histidine biosynthesis; L-histidine from 5-phospho-alpha-D-ribose 1-diphosphate: step 6/9. This is Imidazoleglycerol-phosphate dehydratase from Vesicomyosocius okutanii subsp. Calyptogena okutanii (strain HA).